The chain runs to 339 residues: Dihydroorotate dehydrogenase (quinone) (339 aa).

FMN contacts are provided by residues 64–68 (AGADK) and T88. A substrate-binding site is contributed by K68. Residue 113-117 (NRNGF) coordinates substrate. Positions 141 and 174 each coordinate FMN. Substrate is bound at residue N174. S177 (nucleophile) is an active-site residue. N179 lines the substrate pocket. Positions 219 and 247 each coordinate FMN. 248–249 (NT) provides a ligand contact to substrate. Residues G270, G299, and 320–321 (YS) each bind FMN.

This sequence belongs to the dihydroorotate dehydrogenase family. Type 2 subfamily. Monomer. FMN serves as cofactor.

The protein localises to the cell membrane. It catalyses the reaction (S)-dihydroorotate + a quinone = orotate + a quinol. It participates in pyrimidine metabolism; UMP biosynthesis via de novo pathway; orotate from (S)-dihydroorotate (quinone route): step 1/1. Catalyzes the conversion of dihydroorotate to orotate with quinone as electron acceptor. The sequence is that of Dihydroorotate dehydrogenase (quinone) from Haemophilus influenzae (strain PittGG).